A 130-amino-acid chain; its full sequence is UPF0251 protein MmarC5_0986 (130 aa).

The protein belongs to the UPF0251 family.

The sequence is that of UPF0251 protein MmarC5_0986 from Methanococcus maripaludis (strain C5 / ATCC BAA-1333).